The sequence spans 185 residues: MPQHQNYSLSEEDVIQLVFRKYGVKITSEQIVRAYAPEQKMSWKKSVEVARFIKGMTLRQAKSWLEDVVKMKRPIPIKTFKKKQAHHAVPWSGWPVAKWPVKVAKRFLDLLENLENNAKFRGLDVERVVIVHAAAHKGYRIPNIMPRAFGRATRFDEQTVNVEVIAAELPKEVVPKRYKLNLVKR.

This sequence belongs to the universal ribosomal protein uL22 family. In terms of assembly, part of the 50S ribosomal subunit.

In terms of biological role, this protein binds specifically to 23S rRNA. It makes multiple contacts with different domains of the 23S rRNA in the assembled 50S subunit and ribosome. Its function is as follows. The globular domain of the protein is located near the polypeptide exit tunnel on the outside of the subunit, while an extended beta-hairpin is found that lines the wall of the exit tunnel in the center of the 70S ribosome. This is Large ribosomal subunit protein uL22 from Pyrobaculum islandicum (strain DSM 4184 / JCM 9189 / GEO3).